We begin with the raw amino-acid sequence, 1235 residues long: MGLNIPPKPESSLWTDDQWKAIQAEGNNVLVAAAAGSGKTAVLVTRIIEKLINESANLNVDELLIVTFTNASAAEMKFRIGKGLEEALAQNPDSTHLKRQVALLNYASISTLHSFCLEIIRKYYFDADIDPNFRLIEPIESSMIRDEVLENLLEQEYSIENNEPFFHLVESFTGDRSDAELHALISKLYDFSRANPDPNIWLEEMVDFYNTEETTSITELPYFPIIKEDIELRVNQAKNYLLNAIDYANENNGPVPYLATLENDLAQIEAITELSWNSWGQLKKAIESIDFKRIPTLKNKSDYDEEYVEEAKKFRDAAKKEIKNIATDWFSREEINYLSDLEKMKPDIKTLSRLVKKFAENFFEEKQQRGVLDFNDLEHLALKILLKDNEASEVAKNYQKQFKEVLIDEYQDTNMVQETILRLVTNSGEEQGNLFMVGDVKQSIYRFRLAEPTLFMTKYQTYQQDGNGSGIRIDLSQNFRSRKEVLDATNFIFHQLMDKHIAEIDYDAAAELTLGASFPETTDMATELLLIDMKSVESETEDELSPQELQKNQVESRAIAMKIKEMIDNKFPIFDKKMKQNRPIQYRDIVILARAMTSAPDMEEAMKVQDIPFYANNNSGYFETTEVATMIALMKVIDNPYQDIPLAAVLRSPIIGLNEEELGQVRMAKKNGYFYDALLTYKDTTVSETADKMSDFIQQLNNWRELSIRENLTSLIWQIYQETNFYEFVGGLPGGKQRQANLRALYDRANQYEKTSFRGLFRFVRFVERLEVRGDDLGTAKTLGEKEDVVRMMTIHASKGLEFPVVIVSGLSRKFNMRDIYSKTLLDKDYGFASNYRDIEKMIVYPTIMQQAMKQKKSREMIAEEMRVLYVALTRAEEKLILTATVPDFEKTSKNWLQVAKEKETILPASTRAKAKCYLDWIGNATIRHPNFKELLCEEMIQTLPTDMKLQIEIKTKEMFLTNELEKTETVNWLENIKEHQPIPVKSPYKDEIQRYMNYEYQNEEATEIRAKQSVTELKRQFSLQDSWSDTTLLKEFQKVSLDRPKFLQQNKLSATEIGTAMHTLMQAVSLEHQPTKEDLEQLLQTMREKDILTEAQLKAINIKQVLGFFESQLGKTMLQKKDLVKREVPFSYLLPVSELYEKVDIDERVLIQGVVDSMIEEEETITLIDYKTDKIEGRYSNWEAAEKIMKERYHIQIKLYAKAIQAISGKKVDAAYLYFFDGQHICQINTKEGF.

A UvrD-like helicase ATP-binding domain is found at 12-482; that stretch reads SLWTDDQWKA…IDLSQNFRSR (471 aa). Residue 33–40 coordinates ATP; it reads AAAGSGKT. Positions 509–800 constitute a UvrD-like helicase C-terminal domain; sequence AAELTLGASF…RMMTIHASKG (292 aa).

The protein belongs to the helicase family. AddA subfamily. Heterodimer of AddA and AddB/RexB. The cofactor is Mg(2+).

The catalysed reaction is Couples ATP hydrolysis with the unwinding of duplex DNA by translocating in the 3'-5' direction.. The enzyme catalyses ATP + H2O = ADP + phosphate + H(+). Its function is as follows. The heterodimer acts as both an ATP-dependent DNA helicase and an ATP-dependent, dual-direction single-stranded exonuclease. Recognizes the chi site generating a DNA molecule suitable for the initiation of homologous recombination. The AddA nuclease domain is required for chi fragment generation; this subunit has the helicase and 3' -&gt; 5' nuclease activities. This Listeria monocytogenes serotype 4b (strain F2365) protein is ATP-dependent helicase/nuclease subunit A.